We begin with the raw amino-acid sequence, 635 residues long: Threonine--tRNA ligase (635 aa).

Residues 1-61 (MIVITLPDGS…EGDARLAIVT (61 aa)) form the TGS domain. Residues 242–533 (DHRKLGRELD…LIEQHAGALP (292 aa)) are catalytic. Cys-333, His-384, and His-510 together coordinate Zn(2+).

It belongs to the class-II aminoacyl-tRNA synthetase family. As to quaternary structure, homodimer. Requires Zn(2+) as cofactor.

It is found in the cytoplasm. The enzyme catalyses tRNA(Thr) + L-threonine + ATP = L-threonyl-tRNA(Thr) + AMP + diphosphate + H(+). In terms of biological role, catalyzes the attachment of threonine to tRNA(Thr) in a two-step reaction: L-threonine is first activated by ATP to form Thr-AMP and then transferred to the acceptor end of tRNA(Thr). Also edits incorrectly charged L-seryl-tRNA(Thr). The chain is Threonine--tRNA ligase from Methylibium petroleiphilum (strain ATCC BAA-1232 / LMG 22953 / PM1).